A 471-amino-acid chain; its full sequence is 5-hydroxytryptamine receptor 2A (471 aa).

Topologically, residues 1 to 80 are extracellular; the sequence is MEILCEDNTS…LQEKNWSALL (80 aa). Asn-8, Asn-38, Asn-44, Asn-51, and Asn-54 each carry an N-linked (GlcNAc...) asparagine glycan. Residues 81–97 form a helical membrane-spanning segment; sequence TAVVIILTIAGNILVIM. The Cytoplasmic segment spans residues 98–111; that stretch reads AVSLEKKLQNATNY. Residues 112–137 form a helical membrane-spanning segment; sequence FLMSLAIADMLLGFLVMPVSMLTILY. The Extracellular segment spans residues 138-146; sequence GYRWPLPSK. A helical membrane pass occupies residues 147–171; sequence LCAVWIYLDVLFSTASIMHLCAISL. Residues Cys-148 and Cys-227 are joined by a disulfide bond. Serotonin is bound at residue Asp-155. The short motif at 172–174 is the DRY motif; important for ligand-induced conformation changes element; the sequence is DRY. Over 172-191 the chain is Cytoplasmic; it reads DRYVAIQNPIHHSRFNSRTK. A helical transmembrane segment spans residues 192–215; it reads AFLKIIAVWTISVGVSMPIPVFGL. At 216–232 the chain is on the extracellular side; the sequence is QDDSKVFKQGSCLLADD. A helical membrane pass occupies residues 233–258; the sequence is NFVLIGSFVAFFIPLTIMVITYFLTI. Topologically, residues 259–322 are cytoplasmic; the sequence is KSLQKEATLC…QSISNEQKAC (64 aa). A Phosphoserine modification is found at Ser-280. A helical membrane pass occupies residues 323-348; that stretch reads KVLGIVFFLFVVMWCPFFITNIMAVI. Asn-343 provides a ligand contact to serotonin. Cys-349 and Cys-353 form a disulfide bridge. Residues 349 to 356 are Extracellular-facing; sequence CKESCNEH. A helical transmembrane segment spans residues 357–382; it reads VIGALLNVFVWIGYLSSAVNPLVYTL. The NPxxY motif; important for ligand-induced conformation changes and signaling signature appears at 376–380; sequence NPLVY. Topologically, residues 383–471 are cytoplasmic; sequence FNKTYRSAFS…NTVNEKVSCV (89 aa). Positions 469–471 match the PDZ-binding motif; sequence SCV.

This sequence belongs to the G-protein coupled receptor 1 family. As to quaternary structure, interacts (via C-terminus) with MPDZ and PATJ. May interact (via C-terminus) with MPP3, PRDX6, DLG4, DLG1, CASK, APBA1 and MAGI2. Interacts with GRM2 and DRD2; this may affect signaling.

Its subcellular location is the cell membrane. It localises to the cell projection. It is found in the dendrite. The protein resides in the axon. The protein localises to the cytoplasmic vesicle. Its subcellular location is the membrane. It localises to the caveola. It is found in the presynapse. G-protein coupled receptor activity is regulated by lipids: oleamide increases HTR2A-mediated activity. Its function is as follows. G-protein coupled receptor for 5-hydroxytryptamine (serotonin). Also functions as a receptor for various drugs and psychoactive substances, including mescaline, psilocybin, 1-(2,5-dimethoxy-4-iodophenyl)-2-aminopropane (DOI) and lysergic acid diethylamide (LSD). Ligand binding causes a conformation change that triggers signaling via guanine nucleotide-binding proteins (G proteins) and modulates the activity of downstream effectors. HTR2A is coupled to G(q)/G(11) G alpha proteins and activates phospholipase C-beta, releasing diacylglycerol (DAG) and inositol 1,4,5-trisphosphate (IP3) second messengers that modulate the activity of phosphatidylinositol 3-kinase and promote the release of Ca(2+) ions from intracellular stores, respectively. Beta-arrestin family members inhibit signaling via G proteins and mediate activation of alternative signaling pathways. Affects neural activity, perception, cognition and mood. Plays a role in the regulation of behavior, including responses to anxiogenic situations and psychoactive substances. Plays a role in intestinal smooth muscle contraction, and may play a role in arterial vasoconstriction. This is 5-hydroxytryptamine receptor 2A (HTR2A) from Cricetulus griseus (Chinese hamster).